We begin with the raw amino-acid sequence, 104 residues long: Iron-sulfur cluster assembly protein CyaY (104 aa).

Belongs to the frataxin family.

In terms of biological role, involved in iron-sulfur (Fe-S) cluster assembly. May act as a regulator of Fe-S biogenesis. In Aliivibrio fischeri (strain ATCC 700601 / ES114) (Vibrio fischeri), this protein is Iron-sulfur cluster assembly protein CyaY.